Reading from the N-terminus, the 240-residue chain is Adapter protein MecA (240 aa).

Positions 118 to 138 (EQRAQQQKHSHKSEQKQTKQR) are disordered.

This sequence belongs to the MecA family. As to quaternary structure, homodimer.

Functionally, enables the recognition and targeting of unfolded and aggregated proteins to the ClpC protease or to other proteins involved in proteolysis. The sequence is that of Adapter protein MecA from Staphylococcus haemolyticus (strain JCSC1435).